The primary structure comprises 248 residues: Cytochrome c oxidase subunit 2 (248 aa).

The Mitochondrial intermembrane portion of the chain corresponds to Met-1–Gln-43. The chain crosses the membrane as a helical span at residues Val-44–Gly-65. The Mitochondrial matrix portion of the chain corresponds to Lys-66 to Glu-79. The chain crosses the membrane as a helical span at residues Ile-80–Lys-99. The Mitochondrial intermembrane portion of the chain corresponds to Leu-100–Glu-248. Residues His-180, Cys-215, Glu-217, Cys-219, His-223, and Met-226 each coordinate Cu cation. Glu-217 serves as a coordination point for Mg(2+).

It belongs to the cytochrome c oxidase subunit 2 family. Component of the cytochrome c oxidase (complex IV, CIV), a multisubunit enzyme composed of a catalytic core of 3 subunits and several supernumerary subunits. The complex exists as a monomer or a dimer and forms supercomplexes (SCs) in the inner mitochondrial membrane with ubiquinol-cytochrome c oxidoreductase (cytochrome b-c1 complex, complex III, CIII). Cu cation serves as cofactor.

It is found in the mitochondrion inner membrane. The catalysed reaction is 4 Fe(II)-[cytochrome c] + O2 + 8 H(+)(in) = 4 Fe(III)-[cytochrome c] + 2 H2O + 4 H(+)(out). In terms of biological role, component of the cytochrome c oxidase, the last enzyme in the mitochondrial electron transport chain which drives oxidative phosphorylation. The respiratory chain contains 3 multisubunit complexes succinate dehydrogenase (complex II, CII), ubiquinol-cytochrome c oxidoreductase (cytochrome b-c1 complex, complex III, CIII) and cytochrome c oxidase (complex IV, CIV), that cooperate to transfer electrons derived from NADH and succinate to molecular oxygen, creating an electrochemical gradient over the inner membrane that drives transmembrane transport and the ATP synthase. Cytochrome c oxidase is the component of the respiratory chain that catalyzes the reduction of oxygen to water. Electrons originating from reduced cytochrome c in the intermembrane space (IMS) are transferred via the dinuclear copper A center (CU(A)) of subunit 2 and heme A of subunit 1 to the active site in subunit 1, a binuclear center (BNC) formed by heme A3 and copper B (CU(B)). The BNC reduces molecular oxygen to 2 water molecules using 4 electrons from cytochrome c in the IMS and 4 protons from the mitochondrial matrix. The polypeptide is Cytochrome c oxidase subunit 2 (COII) (Metridium senile (Brown sea anemone)).